A 548-amino-acid polypeptide reads, in one-letter code: Myrosinase (548 aa).

The first 20 residues, 1–20 (MKLLHGLALVFLLAAASCKA), serve as a signal peptide directing secretion. 3 cysteine pairs are disulfide-bonded: Cys26–Cys458, Cys34–Cys454, and Cys226–Cys236. Residue Gln59 participates in substrate binding. His76 and Asp90 together coordinate Zn(2+). Asn110 carries an N-linked (GlcNAc...) asparagine glycan. Residues His161 and Asn206 each coordinate substrate. Gln207 serves as a coordination point for L-ascorbate. Asn240 carries N-linked (GlcNAc...) asparagine glycosylation. Position 281 (Arg281) interacts with L-ascorbate. N-linked (GlcNAc...) asparagine glycosylation occurs at Asn331. Tyr352 lines the substrate pocket. Glu429 serves as the catalytic Nucleophile. Residues Trp477 and 484–485 (EF) each bind substrate. An N-linked (GlcNAc...) asparagine glycan is attached at Asn520.

It belongs to the glycosyl hydrolase 1 family. As to quaternary structure, homodimer. In vacuoles called myrosin grains of a certain class of cells, myrosin cells, distributed in the cotyledons and the axis of the embryo as well as in different organs of the growing plant.

It is found in the vacuole. The enzyme catalyses a thioglucoside + H2O = a sugar + a thiol.. Degradation of glucosinolates (glucose residue linked by a thioglucoside bound to an amino acid derivative) to glucose, sulfate and any of the products: thiocyanates, isothiocyanates, nitriles, epithionitriles or oxazolidine-2-thiones. The protein is Myrosinase of Brassica napus (Rape).